We begin with the raw amino-acid sequence, 352 residues long: MKQYEFARHINTYFSVAQNMLFSIFLYYAFSLLIFLSIFVFKMRKALYSLLFYMCICLYIYTPVFMASLKEIEVGNYFICNLKDYPTGNCSVNHDYNKTIKLLCPIIHNKNNSDKTYDPSYCFKYDGIKDEFIINNKQNYIHNTLPGVILKSHIENDTYNLSIYPPFVVKEDITIVCICDSEKGNEGITPYLKINIKKAHGLNNDLEGDYIKGCDYGNNKGKYQFLTKSIKYTIDPICEIHAYPGDIVGINCNNYTTKIQDVSLEPNSCFGMVYFSILTMVFVKTNVNNVMPNAKYYPDLASHHGNQNSKMFLTAYLLIPNEIERDILIYCTCSYNGNKGLAIYHIFSTKED.

The first 29 residues, 1-29 (MKQYEFARHINTYFSVAQNMLFSIFLYYA), serve as a signal peptide directing secretion. 2 consecutive 6-Cys domains span residues 53 to 199 (YMCI…IKKA) and 210 to 351 (YIKG…STKE). Cys57 and Cys90 are oxidised to a cystine. 5 N-linked (GlcNAc...) asparagine glycosylation sites follow: Asn89, Asn97, Asn111, Asn156, and Asn160. 5 disulfide bridges follow: Cys104–Cys179, Cys122–Cys177, Cys214–Cys238, Cys252–Cys333, and Cys269–Cys331. A glycan (N-linked (GlcNAc...) asparagine) is linked at Asn254.

Its subcellular location is the cell membrane. The protein localises to the cell surface. Involved in sporozoite infection of hepatocytes and replication therein. This is Sporozoite surface protein P36 (PBS36) from Plasmodium berghei (strain Anka).